Here is a 668-residue protein sequence, read N- to C-terminus: Threonine--tRNA ligase (668 aa).

Positions 1–64 (MSQAISLTFP…TDGKIEIITR (64 aa)) constitute a TGS domain. Positions 245 to 553 (DHRKLGREMD…LIENFAGHMP (309 aa)) are catalytic. Residues C347, H398, and H530 each coordinate Zn(2+).

It belongs to the class-II aminoacyl-tRNA synthetase family. Homodimer. The cofactor is Zn(2+).

Its subcellular location is the cytoplasm. It carries out the reaction tRNA(Thr) + L-threonine + ATP = L-threonyl-tRNA(Thr) + AMP + diphosphate + H(+). Catalyzes the attachment of threonine to tRNA(Thr) in a two-step reaction: L-threonine is first activated by ATP to form Thr-AMP and then transferred to the acceptor end of tRNA(Thr). Also edits incorrectly charged L-seryl-tRNA(Thr). The chain is Threonine--tRNA ligase from Rhizobium etli (strain CIAT 652).